The primary structure comprises 76 residues: MSKEKQSFEEMMKELENIVQKLDNEAVSLEESLDLYQRGMKLSANCDSTLKEAEKKVNELMQEEVGDKGNEETTDE.

This sequence belongs to the XseB family. As to quaternary structure, heterooligomer composed of large and small subunits.

The protein localises to the cytoplasm. The enzyme catalyses Exonucleolytic cleavage in either 5'- to 3'- or 3'- to 5'-direction to yield nucleoside 5'-phosphates.. In terms of biological role, bidirectionally degrades single-stranded DNA into large acid-insoluble oligonucleotides, which are then degraded further into small acid-soluble oligonucleotides. This chain is Exodeoxyribonuclease 7 small subunit, found in Staphylococcus epidermidis (strain ATCC 35984 / DSM 28319 / BCRC 17069 / CCUG 31568 / BM 3577 / RP62A).